The following is a 197-amino-acid chain: 3-isopropylmalate dehydratase small subunit (197 aa).

The protein belongs to the LeuD family. LeuD type 1 subfamily. As to quaternary structure, heterodimer of LeuC and LeuD.

It carries out the reaction (2R,3S)-3-isopropylmalate = (2S)-2-isopropylmalate. It participates in amino-acid biosynthesis; L-leucine biosynthesis; L-leucine from 3-methyl-2-oxobutanoate: step 2/4. In terms of biological role, catalyzes the isomerization between 2-isopropylmalate and 3-isopropylmalate, via the formation of 2-isopropylmaleate. This Azobacteroides pseudotrichonymphae genomovar. CFP2 protein is 3-isopropylmalate dehydratase small subunit.